Here is a 308-residue protein sequence, read N- to C-terminus: Glutathione synthetase (308 aa).

The 185-residue stretch at 120 to 304 (KLGALRFNNL…LADQVIARLL (185 aa)) folds into the ATP-grasp domain. 146-202 (AREQEEVVLKPLGGRAGQGLVRVAGAAPGLEALLELVTDQEQLPVMVQRFLPAVIEG) serves as a coordination point for ATP. Glu-275 and Asn-277 together coordinate Mg(2+).

Belongs to the prokaryotic GSH synthase family. The cofactor is Mg(2+). Mn(2+) is required as a cofactor.

It catalyses the reaction gamma-L-glutamyl-L-cysteine + glycine + ATP = glutathione + ADP + phosphate + H(+). It functions in the pathway sulfur metabolism; glutathione biosynthesis; glutathione from L-cysteine and L-glutamate: step 2/2. The chain is Glutathione synthetase from Prochlorococcus marinus (strain MIT 9313).